Here is a 101-residue protein sequence, read N- to C-terminus: NAD(P)H-quinone oxidoreductase subunit 4L, chloroplastic (101 aa).

Helical transmembrane passes span 2–22 (MLEY…YGLI), 32–52 (MCLE…SDLF), and 61–81 (IFSI…PAIV).

This sequence belongs to the complex I subunit 4L family. As to quaternary structure, NDH is composed of at least 16 different subunits, 5 of which are encoded in the nucleus.

It is found in the plastid. It localises to the chloroplast thylakoid membrane. It catalyses the reaction a plastoquinone + NADH + (n+1) H(+)(in) = a plastoquinol + NAD(+) + n H(+)(out). The catalysed reaction is a plastoquinone + NADPH + (n+1) H(+)(in) = a plastoquinol + NADP(+) + n H(+)(out). Functionally, NDH shuttles electrons from NAD(P)H:plastoquinone, via FMN and iron-sulfur (Fe-S) centers, to quinones in the photosynthetic chain and possibly in a chloroplast respiratory chain. The immediate electron acceptor for the enzyme in this species is believed to be plastoquinone. Couples the redox reaction to proton translocation, and thus conserves the redox energy in a proton gradient. This Acorus calamus var. americanus (American sweet flag) protein is NAD(P)H-quinone oxidoreductase subunit 4L, chloroplastic.